The chain runs to 118 residues: V-type proton ATPase subunit G 2 (118 aa).

A coiled-coil region spans residues 8–57; that stretch reads IQQLLQAEKRAAEKVADARKRKARRLKQAKEEAQMEVDQYRREREQEFQS. Positions 25 to 90 are disordered; the sequence is ARKRKARRLK…VQGMQSSQQR (66 aa). Residues 35 to 55 show a composition bias toward basic and acidic residues; the sequence is QAKEEAQMEVDQYRREREQEF. Composition is skewed to polar residues over residues 56-69 and 78-89; these read QSKQ…QGNL and RRQVQGMQSSQQ.

Belongs to the V-ATPase G subunit family. As to quaternary structure, V-ATPase is a heteromultimeric enzyme made up of two complexes: the ATP-hydrolytic V1 complex and the proton translocation V0 complex. The V1 complex consists of three catalytic AB heterodimers that form a heterohexamer, three peripheral stalks each consisting of EG heterodimers, one central rotor including subunits D and F, and the regulatory subunits C and H. The proton translocation complex V0 consists of the proton transport subunit a, a ring of proteolipid subunits c9c'', rotary subunit d, subunits e and f, and the accessory subunits ATP6AP1/Ac45 and ATP6AP2/PRR. As to expression, expressed in brain (at protein level).

The protein localises to the melanosome. The protein resides in the cytoplasmic vesicle. It localises to the clathrin-coated vesicle membrane. Subunit of the V1 complex of vacuolar(H+)-ATPase (V-ATPase), a multisubunit enzyme composed of a peripheral complex (V1) that hydrolyzes ATP and a membrane integral complex (V0) that translocates protons. V-ATPase is responsible for acidifying and maintaining the pH of intracellular compartments and in some cell types, is targeted to the plasma membrane, where it is responsible for acidifying the extracellular environment. In Bos taurus (Bovine), this protein is V-type proton ATPase subunit G 2.